A 175-amino-acid chain; its full sequence is ATP-dependent protease subunit HslV (175 aa).

T2 is a catalytic residue. Positions 158, 161, and 164 each coordinate Na(+).

Belongs to the peptidase T1B family. HslV subfamily. As to quaternary structure, a double ring-shaped homohexamer of HslV is capped on each side by a ring-shaped HslU homohexamer. The assembly of the HslU/HslV complex is dependent on binding of ATP.

It localises to the cytoplasm. It carries out the reaction ATP-dependent cleavage of peptide bonds with broad specificity.. With respect to regulation, allosterically activated by HslU binding. Its function is as follows. Protease subunit of a proteasome-like degradation complex believed to be a general protein degrading machinery. The polypeptide is ATP-dependent protease subunit HslV (Histophilus somni (strain 129Pt) (Haemophilus somnus)).